The following is a 184-amino-acid chain: UPF0302 protein OB1778 (184 aa).

Belongs to the UPF0302 family.

This is UPF0302 protein OB1778 from Oceanobacillus iheyensis (strain DSM 14371 / CIP 107618 / JCM 11309 / KCTC 3954 / HTE831).